We begin with the raw amino-acid sequence, 706 residues long: Fatty acid oxidation complex subunit alpha (706 aa).

Residues 1–188 are enoyl-CoA hydratase; that stretch reads MDKSFTLNRL…KMGLVDDVVP (188 aa). The segment at 308–706 is 3-hydroxyacyl-CoA dehydrogenase; that stretch reads KAVNKVMVLG…MAESGSKFYE (399 aa).

The protein in the N-terminal section; belongs to the enoyl-CoA hydratase/isomerase family. In the central section; belongs to the 3-hydroxyacyl-CoA dehydrogenase family. Heterotetramer of two alpha chains (FadJ) and two beta chains (FadI).

Its subcellular location is the cytoplasm. The catalysed reaction is a (3S)-3-hydroxyacyl-CoA = a (2E)-enoyl-CoA + H2O. It carries out the reaction a 4-saturated-(3S)-3-hydroxyacyl-CoA = a (3E)-enoyl-CoA + H2O. It catalyses the reaction a (3S)-3-hydroxyacyl-CoA + NAD(+) = a 3-oxoacyl-CoA + NADH + H(+). The enzyme catalyses (3S)-3-hydroxybutanoyl-CoA = (3R)-3-hydroxybutanoyl-CoA. It functions in the pathway lipid metabolism; fatty acid beta-oxidation. Its function is as follows. Catalyzes the formation of a hydroxyacyl-CoA by addition of water on enoyl-CoA. Also exhibits 3-hydroxyacyl-CoA epimerase and 3-hydroxyacyl-CoA dehydrogenase activities. In Shewanella loihica (strain ATCC BAA-1088 / PV-4), this protein is Fatty acid oxidation complex subunit alpha.